The chain runs to 146 residues: Negative cofactor 2 complex subunit beta (146 aa).

A disordered region spans residues 124–146 (FRQSRSRLHHNSVSDPVKSEDSS). Phosphoserine occurs at positions 135, 137, and 142.

Component of the NC2 (negative cofactor 2) complex composed of BUR6 and NCB2. The NC2 complex associates with SPT15/TBP. Interacts with SPT15/TBP.

Its subcellular location is the nucleus. In terms of biological role, component of the NC2 complex which represses RNA polymerase II transcription through binding to SPT15/TBP and thereby inhibiting the assembly of the preinitiation complex. The NC2 complex may also mediate transcriptional activation from TATA-driven promoters through association with SPT15/TBP. The sequence is that of Negative cofactor 2 complex subunit beta (NCB2) from Saccharomyces cerevisiae (strain ATCC 204508 / S288c) (Baker's yeast).